The following is a 485-amino-acid chain: Zinc finger protein 577 (485 aa).

The disordered stretch occupies residues 1 to 21; it reads MKNATIVMSVRREQGSSSGEG. Residues 23-94 enclose the KRAB domain; sequence LSFEDVAVGF…EGAAHSQICP (72 aa). The C2H2-type 1; degenerate zinc finger occupies 158–180; that stretch reads HECSVCGRAFSRKAQLIQHQRTE. C2H2-type zinc fingers lie at residues 186–208, 214–236, 242–264, 270–292, 298–320, 326–348, and 354–376; these read HGCGECGKTFMRKIQLTEHQRTH, HECSECGKAFSRKSQLMVHQRTH, YRCSKCGKAFSRKCRLNRHQRSH, YGCSVCGKAFSQKAYLTAHQRLH, YKCSDCGRTFYFKSDLTRHQRIH, YECSECEKAFRSKSKLIQHQRTH, and YSCRECGKAFAHMSVLIKHEKTH.

It belongs to the krueppel C2H2-type zinc-finger protein family.

The protein localises to the nucleus. Functionally, may be involved in transcriptional regulation. The sequence is that of Zinc finger protein 577 (ZNF577) from Homo sapiens (Human).